The sequence spans 524 residues: Cytochrome P450 monooxygenase drtD (524 aa).

Residues 2–22 (SDTYLVAASGLAVCFFVLYLL) form a helical membrane-spanning segment. Position 418 (cysteine 418) interacts with heme.

Belongs to the cytochrome P450 family. Heme is required as a cofactor.

It is found in the membrane. Its pathway is secondary metabolite biosynthesis; terpenoid biosynthesis. Its function is as follows. Cytochrome P450 monooxygenase; part of the gene cluster that mediates the biosynthesis of various drimane-type sesquiterpene esters, compounds that exhibit diverse biological activities and are widely present in eukaryotes. The pathway begins with the synthesis of the backbone drimenol by the terpene cyclase drtB using farnesyl pyrophosphate (FPP) as substrate. The cytochrome P450 monooxygenase drtD is then responsible for the hydroxylations at C-6, C-9 and C-12, as well as the oxidation of hydroxyl groups at C-6 and C-11 to a ketone and an aldehyde, respectively. Then, the biosynthesis can go in two directions, either the hydroxylated drimenol is further hydroxylated at C-2 and C-3 by an enzyme(s) not associated with the drt cluster, or the FAD-binding oxidoreductase drtC further oxidizes C-11 or C-12 to form the butyrolactone ring. DrtB, drtD and drtC are solely responsible for the formation of the different drimane structures observed during drimane sesquiterpenes biosynthesis. The polyketide synthase drtA synthesizes different lengths (C6 and C8) of PKS chains, which are then oxidized to varying degrees by the short-chain dehydrogenase drtF. Finally, these PKS chains are transferred onto drimane sesquiterpenes by the acyltransferase drtE, forming the sesquiterpene esters. In addition to the different fatty acyl-CoA chains produced by drtA, drtE is also able to use cinnamoyl-CoA as a substrate. This is Cytochrome P450 monooxygenase drtD from Aspergillus calidoustus.